Consider the following 141-residue polypeptide: Nucleoside diphosphate kinase (141 aa).

Lysine 11, phenylalanine 59, arginine 87, threonine 93, arginine 104, and asparagine 114 together coordinate ATP. The active-site Pros-phosphohistidine intermediate is histidine 117.

It belongs to the NDK family. As to quaternary structure, homotetramer. The cofactor is Mg(2+).

It localises to the cytoplasm. The enzyme catalyses a 2'-deoxyribonucleoside 5'-diphosphate + ATP = a 2'-deoxyribonucleoside 5'-triphosphate + ADP. The catalysed reaction is a ribonucleoside 5'-diphosphate + ATP = a ribonucleoside 5'-triphosphate + ADP. Its function is as follows. Major role in the synthesis of nucleoside triphosphates other than ATP. The ATP gamma phosphate is transferred to the NDP beta phosphate via a ping-pong mechanism, using a phosphorylated active-site intermediate. The protein is Nucleoside diphosphate kinase of Variovorax paradoxus (strain S110).